Here is a 335-residue protein sequence, read N- to C-terminus: Protein-glutamate methylesterase/protein-glutamine glutaminase 3 (335 aa).

The Response regulatory domain maps to 2-119 (RIGIVNDMPL…GNPQTAAAPL (118 aa)). D53 bears the 4-aspartylphosphate mark. Residues 144 to 335 (PKAGGARQRL…IAPRLAEVFD (192 aa)) enclose the CheB-type methylesterase domain. Catalysis depends on residues S159, H186, and D279.

It belongs to the CheB family. In terms of processing, phosphorylated by CheA. Phosphorylation of the N-terminal regulatory domain activates the methylesterase activity.

Its subcellular location is the cytoplasm. The enzyme catalyses [protein]-L-glutamate 5-O-methyl ester + H2O = L-glutamyl-[protein] + methanol + H(+). The catalysed reaction is L-glutaminyl-[protein] + H2O = L-glutamyl-[protein] + NH4(+). Functionally, involved in chemotaxis. Part of a chemotaxis signal transduction system that modulates chemotaxis in response to various stimuli. Catalyzes the demethylation of specific methylglutamate residues introduced into the chemoreceptors (methyl-accepting chemotaxis proteins or MCP) by CheR. Also mediates the irreversible deamidation of specific glutamine residues to glutamic acid. The sequence is that of Protein-glutamate methylesterase/protein-glutamine glutaminase 3 from Pseudomonas aeruginosa (strain ATCC 15692 / DSM 22644 / CIP 104116 / JCM 14847 / LMG 12228 / 1C / PRS 101 / PAO1).